Reading from the N-terminus, the 299-residue chain is Oxygen-dependent coproporphyrinogen-III oxidase (299 aa).

Position 92 (Ser92) interacts with substrate. Positions 96 and 106 each coordinate Mn(2+). The active-site Proton donor is the His106. 108 to 110 is a substrate binding site; it reads NVR. Positions 145 and 175 each coordinate Mn(2+). The interval 240–275 is important for dimerization; that stretch reads YVEFNLVWDRGTLFGLQTGGRTESILMSMPPLVRWE. Residue 258 to 260 coordinates substrate; sequence GGR.

The protein belongs to the aerobic coproporphyrinogen-III oxidase family. As to quaternary structure, homodimer. The cofactor is Mn(2+).

The protein localises to the cytoplasm. It catalyses the reaction coproporphyrinogen III + O2 + 2 H(+) = protoporphyrinogen IX + 2 CO2 + 2 H2O. It functions in the pathway porphyrin-containing compound metabolism; protoporphyrin-IX biosynthesis; protoporphyrinogen-IX from coproporphyrinogen-III (O2 route): step 1/1. Its function is as follows. Involved in the heme biosynthesis. Catalyzes the aerobic oxidative decarboxylation of propionate groups of rings A and B of coproporphyrinogen-III to yield the vinyl groups in protoporphyrinogen-IX. The sequence is that of Oxygen-dependent coproporphyrinogen-III oxidase from Escherichia coli (strain SMS-3-5 / SECEC).